A 517-amino-acid chain; its full sequence is 2-isopropylmalate synthase (517 aa).

Residues 5–267 enclose the Pyruvate carboxyltransferase domain; the sequence is VIIFDTTLRD…HTNVRCQEIY (263 aa). Mn(2+) contacts are provided by aspartate 14, histidine 202, histidine 204, and asparagine 238. Positions 392-517 are regulatory domain; sequence RLKCFHVDSS…QRKYIKKNNN (126 aa).

Belongs to the alpha-IPM synthase/homocitrate synthase family. LeuA type 1 subfamily. In terms of assembly, homodimer. It depends on Mn(2+) as a cofactor.

It localises to the cytoplasm. It catalyses the reaction 3-methyl-2-oxobutanoate + acetyl-CoA + H2O = (2S)-2-isopropylmalate + CoA + H(+). The protein operates within amino-acid biosynthesis; L-leucine biosynthesis; L-leucine from 3-methyl-2-oxobutanoate: step 1/4. Functionally, catalyzes the condensation of the acetyl group of acetyl-CoA with 3-methyl-2-oxobutanoate (2-ketoisovalerate) to form 3-carboxy-3-hydroxy-4-methylpentanoate (2-isopropylmalate). In Blochmanniella pennsylvanica (strain BPEN), this protein is 2-isopropylmalate synthase.